The sequence spans 400 residues: Probable aspartate/prephenate aminotransferase (400 aa).

L-aspartate is bound by residues G39, W125, and N175. K239 is subject to N6-(pyridoxal phosphate)lysine. R375 is an L-aspartate binding site.

This sequence belongs to the class-I pyridoxal-phosphate-dependent aminotransferase family. Homodimer. The cofactor is pyridoxal 5'-phosphate.

Its subcellular location is the cytoplasm. It catalyses the reaction L-aspartate + 2-oxoglutarate = oxaloacetate + L-glutamate. It carries out the reaction L-arogenate + 2-oxoglutarate = prephenate + L-glutamate. Functionally, catalyzes the reversible conversion of aspartate and 2-oxoglutarate to glutamate and oxaloacetate. Can also transaminate prephenate in the presence of glutamate. The polypeptide is Probable aspartate/prephenate aminotransferase (aspC) (Rhizobium leguminosarum bv. phaseoli).